The chain runs to 394 residues: Elongation factor Tu (394 aa).

The 195-residue stretch at 10–204 (KPHVNVGTIG…ALDSYIPEPE (195 aa)) folds into the tr-type G domain. Positions 19-26 (GHVDHGKT) are G1. 19-26 (GHVDHGKT) lines the GTP pocket. A Mg(2+)-binding site is contributed by Thr26. A G2 region spans residues 60–64 (GITIS). The G3 stretch occupies residues 81–84 (DCPG). GTP-binding positions include 81–85 (DCPGH) and 136–139 (NKCD). Positions 136 to 139 (NKCD) are G4. The segment at 174–176 (SAL) is G5.

It belongs to the TRAFAC class translation factor GTPase superfamily. Classic translation factor GTPase family. EF-Tu/EF-1A subfamily. As to quaternary structure, monomer.

It is found in the cytoplasm. The catalysed reaction is GTP + H2O = GDP + phosphate + H(+). Its function is as follows. GTP hydrolase that promotes the GTP-dependent binding of aminoacyl-tRNA to the A-site of ribosomes during protein biosynthesis. In Pseudoalteromonas atlantica (strain T6c / ATCC BAA-1087), this protein is Elongation factor Tu.